We begin with the raw amino-acid sequence, 71 residues long: IRCFITPDVTSQACPDGHVCYTKMWCDNFCGMRGKRVDLGCAATCPKVKPGVNIKCCSRDNCNPFPTRKRS.

5 disulfide bridges follow: Cys3-Cys20, Cys14-Cys41, Cys26-Cys30, Cys45-Cys56, and Cys57-Cys62.

It belongs to the three-finger toxin family. Long-chain subfamily. Type II alpha-neurotoxin sub-subfamily. Expressed by the venom gland.

The protein resides in the secreted. Binds with high affinity to muscular (alpha-1/CHRNA1) and neuronal (alpha-7/CHRNA7) nicotinic acetylcholine receptor (nAChR) and inhibits acetylcholine from binding to the receptor, thereby impairing neuromuscular and neuronal transmission. This Naja nivea (Cape cobra) protein is Long neurotoxin 1.